The following is a 519-amino-acid chain: NAD-dependent histone deacetylase SIR2 (519 aa).

The disordered stretch occupies residues 154 to 212 (EIDENDNKNDGTNNSDIDSDIDSNSDMDSQSESGELDDAMDVDDSLSENEDEYDQDMST). A compositionally biased stretch (acidic residues) spans 187–208 (GELDDAMDVDDSLSENEDEYDQ). A Deacetylase sirtuin-type domain is found at 221–486 (MTPFKYKLPD…SYLCKCLKWD (266 aa)). NAD(+)-binding positions include 246 to 265 (GAGI…KGLY) and 328 to 331 (QNID). Catalysis depends on His348, which acts as the Proton acceptor. Zn(2+) contacts are provided by Cys356, Cys359, Cys380, and Cys383. NAD(+)-binding positions include 430-432 (GTS), 455-457 (NKD), and Cys472.

The protein belongs to the sirtuin family. Class I subfamily. Interacts with HXK1. It depends on Zn(2+) as a cofactor.

It is found in the nucleus. The enzyme catalyses N(6)-acetyl-L-lysyl-[protein] + NAD(+) + H2O = 2''-O-acetyl-ADP-D-ribose + nicotinamide + L-lysyl-[protein]. NAD-dependent deacetylase. Heterochromatin component that silences transcription at silent mating loci, telomeres and the ribosomal DNA, and that also suppresses recombination in the rDNA and extends replicative life span. It acts as a NAD-dependent histone deacetylase, which deacetylates 'Lys-9' and 'Lys-14' of Histone H3 and 'Lys-16' of Histone H4. Functions in the distribution of oxidatively damaged proteins during cell division. Mediates phenotypic switching. In Candida albicans (strain SC5314 / ATCC MYA-2876) (Yeast), this protein is NAD-dependent histone deacetylase SIR2.